Consider the following 463-residue polypeptide: ATP-dependent protease ATPase subunit HslU (463 aa).

ATP is bound by residues isoleucine 19, 61–66 (GVGKTE), aspartate 277, glutamate 341, and arginine 413.

Belongs to the ClpX chaperone family. HslU subfamily. A double ring-shaped homohexamer of HslV is capped on each side by a ring-shaped HslU homohexamer. The assembly of the HslU/HslV complex is dependent on binding of ATP.

Its subcellular location is the cytoplasm. ATPase subunit of a proteasome-like degradation complex; this subunit has chaperone activity. The binding of ATP and its subsequent hydrolysis by HslU are essential for unfolding of protein substrates subsequently hydrolyzed by HslV. HslU recognizes the N-terminal part of its protein substrates and unfolds these before they are guided to HslV for hydrolysis. This is ATP-dependent protease ATPase subunit HslU from Bacillus cereus (strain B4264).